The chain runs to 136 residues: Large-conductance mechanosensitive channel (136 aa).

A run of 2 helical transmembrane segments spans residues Ala9–Phe29 and Ile79–Ile99.

The protein belongs to the MscL family. As to quaternary structure, homopentamer.

It localises to the cell inner membrane. Its function is as follows. Channel that opens in response to stretch forces in the membrane lipid bilayer. May participate in the regulation of osmotic pressure changes within the cell. The sequence is that of Large-conductance mechanosensitive channel from Shewanella sp. (strain MR-4).